A 350-amino-acid chain; its full sequence is Ketol-acid reductoisomerase (NADP(+)) (350 aa).

Residues 4 to 187 (VSITTDYSRM…GGARANIIKT (184 aa)) form the KARI N-terminal Rossmann domain. Residues 30–33 (YGSQ), Arg53, Thr58, and 88–91 (DMVQ) each bind NADP(+). Residue His113 is part of the active site. An NADP(+)-binding site is contributed by Gly139. The KARI C-terminal knotted domain maps to 188–333 (TFKEETETDL…KQLRAKMVWL (146 aa)). Mg(2+) contacts are provided by Asp196, Glu200, Glu232, and Glu236. Ser257 is a substrate binding site.

This sequence belongs to the ketol-acid reductoisomerase family. It depends on Mg(2+) as a cofactor.

It catalyses the reaction (2R)-2,3-dihydroxy-3-methylbutanoate + NADP(+) = (2S)-2-acetolactate + NADPH + H(+). The catalysed reaction is (2R,3R)-2,3-dihydroxy-3-methylpentanoate + NADP(+) = (S)-2-ethyl-2-hydroxy-3-oxobutanoate + NADPH + H(+). It functions in the pathway amino-acid biosynthesis; L-isoleucine biosynthesis; L-isoleucine from 2-oxobutanoate: step 2/4. Its pathway is amino-acid biosynthesis; L-valine biosynthesis; L-valine from pyruvate: step 2/4. Its function is as follows. Involved in the biosynthesis of branched-chain amino acids (BCAA). Catalyzes an alkyl-migration followed by a ketol-acid reduction of (S)-2-acetolactate (S2AL) to yield (R)-2,3-dihydroxy-isovalerate. In the isomerase reaction, S2AL is rearranged via a Mg-dependent methyl migration to produce 3-hydroxy-3-methyl-2-ketobutyrate (HMKB). In the reductase reaction, this 2-ketoacid undergoes a metal-dependent reduction by NADPH to yield (R)-2,3-dihydroxy-isovalerate. The sequence is that of Ketol-acid reductoisomerase (NADP(+)) from Xylella fastidiosa (strain 9a5c).